Here is a 370-residue protein sequence, read N- to C-terminus: Cytochrome b (370 aa).

The next 4 helical transmembrane spans lie at 25–45 (FGSM…FLAV), 69–90 (WMMQ…YIHI), 105–125 (WLSG…GYVL), and 170–190 (FFAL…LHVM). Heme b is bound by residues H75 and H89. The heme b site is built by H174 and H188. H193 contributes to the a ubiquinone binding site. The next 4 helical transmembrane spans lie at 218–238 (YKDL…ISFY), 280–300 (LGGA…PFTH), 312–332 (FMQL…WTAT), and 339–358 (FTMI…ISNP).

This sequence belongs to the cytochrome b family. In terms of assembly, the cytochrome bc1 complex contains 3 respiratory subunits (MT-CYB, CYC1 and UQCRFS1), 2 core proteins (UQCRC1 and UQCRC2) and probably 6 low-molecular weight proteins. It depends on heme b as a cofactor.

It is found in the mitochondrion inner membrane. Its function is as follows. Component of the ubiquinol-cytochrome c reductase complex (complex III or cytochrome b-c1 complex) that is part of the mitochondrial respiratory chain. The b-c1 complex mediates electron transfer from ubiquinol to cytochrome c. Contributes to the generation of a proton gradient across the mitochondrial membrane that is then used for ATP synthesis. This is Cytochrome b (MT-CYB) from Corallus hortulanus enydris (Garden tree boa).